The chain runs to 674 residues: Carcinine transporter (674 aa).

Over 1 to 53 (MSDIEDNDGDEYDELSELRQRHKPESQPSVDEAFDLDDLLPTIGEFGKYQKLL) the chain is Cytoplasmic. The chain crosses the membrane as a helical span at residues 54–74 (VFGICLPACIPCGFCAFNQLF). Residues 75-178 (MADTPDDYWC…DLVCDQDIYP (104 aa)) are Extracellular-facing. Asn-122, Asn-141, and Asn-156 each carry an N-linked (GlcNAc...) asparagine glycan. Residues 179–199 (TIGLAALNTGGPVGVYLFGLL) form a helical membrane-spanning segment. Over 200 to 206 (NDRGGRR) the chain is Cytoplasmic. The chain crosses the membrane as a helical span at residues 207 to 227 (LSYFVCLATLLAGSLMTSLSK). Residues 228-236 (DFWTWAGSR) lie on the Extracellular side of the membrane. A helical transmembrane segment spans residues 237-257 (VIVGLTIPAVYQIPFIISLEL). Residues 258-264 (VGENYRS) are Cytoplasmic-facing. A helical membrane pass occupies residues 265 to 285 (FVTVMTCTFYTSGIMLLSGVT). Topologically, residues 286 to 293 (YLERDWVR) are extracellular. Residues 294–314 (LSYITSLPFYAYFLYMFVMPE) traverse the membrane as a helical segment. Residues 315–385 (SPRWLLMRGR…CRTPNMRLKT (71 aa)) are Cytoplasmic-facing. Residues 386-406 (ILITLSWFANETVYLGLSYYG) traverse the membrane as a helical segment. The Extracellular segment spans residues 407–414 (PALGTNQY). A helical membrane pass occupies residues 415 to 435 (VSFFLSAVVELPSYLCCWYFM). The Cytoplasmic segment spans residues 436 to 441 (DTWGRR). A helical membrane pass occupies residues 442-462 (WPLSLSMILGGVACVITVMLP). Residues 463 to 469 (DDAVDET) lie on the Extracellular side of the membrane. Residues 470–490 (LVLYLVSKALLSASFLIIYPF) traverse the membrane as a helical segment. At 491-500 (AGELYPTQVR) the chain is on the cytoplasmic side. The chain crosses the membrane as a helical span at residues 501–521 (GIGIGASSYIGGLGLIGIPFI). The Extracellular segment spans residues 522–527 (TYLGKD). A helical transmembrane segment spans residues 528–548 (NLKLPLVIMGFLSMLGGMTGL). The Cytoplasmic segment spans residues 549 to 674 (RLPETLHHRL…DGTMQLTHWI (126 aa)). Over residues 614–631 (RDSRRVREPAPRIDERTP) the composition is skewed to basic and acidic residues. Residues 614-647 (RDSRRVREPAPRIDERTPLDTTASGSGRPVHRPS) form a disordered region.

This sequence belongs to the major facilitator (TC 2.A.1) superfamily. Organic cation transporter (TC 2.A.1.19) family. As to expression, expressed in photoreceptor cells.

The protein resides in the cell membrane. It localises to the cell projection. It is found in the axon. Functionally, carcinine transporter which is required for recycling of the neurotransmitter histamine in photoreceptor neurons of the compound eye. Following histamine release from photoreceptors and its uptake by glia where it is converted to carcinine, required for the uptake of carcinine from glia into photoreceptor cells where it can be hydrolyzed by tan to form histamine and beta-alanine. This is Carcinine transporter from Drosophila melanogaster (Fruit fly).